Here is a 358-residue protein sequence, read N- to C-terminus: Probable branched-chain-amino-acid aminotransferase (358 aa).

At Lys196 the chain carries N6-(pyridoxal phosphate)lysine.

The protein belongs to the class-IV pyridoxal-phosphate-dependent aminotransferase family. Pyridoxal 5'-phosphate serves as cofactor.

It catalyses the reaction L-leucine + 2-oxoglutarate = 4-methyl-2-oxopentanoate + L-glutamate. It carries out the reaction L-isoleucine + 2-oxoglutarate = (S)-3-methyl-2-oxopentanoate + L-glutamate. The enzyme catalyses L-valine + 2-oxoglutarate = 3-methyl-2-oxobutanoate + L-glutamate. It functions in the pathway amino-acid biosynthesis; L-isoleucine biosynthesis; L-isoleucine from 2-oxobutanoate: step 4/4. It participates in amino-acid biosynthesis; L-leucine biosynthesis; L-leucine from 3-methyl-2-oxobutanoate: step 4/4. The protein operates within amino-acid biosynthesis; L-valine biosynthesis; L-valine from pyruvate: step 4/4. In terms of biological role, acts on leucine, isoleucine and valine. The sequence is that of Probable branched-chain-amino-acid aminotransferase (ilvE) from Staphylococcus epidermidis (strain ATCC 12228 / FDA PCI 1200).